The primary structure comprises 538 residues: Chaperonin GroEL (538 aa).

ATP-binding positions include 29–32, 86–90, G413, 476–478, and D492; these read TIGP, DGTTT, and NAA.

It belongs to the chaperonin (HSP60) family. Forms a cylinder of 14 subunits composed of two heptameric rings stacked back-to-back. Interacts with the co-chaperonin GroES.

It localises to the cytoplasm. The enzyme catalyses ATP + H2O + a folded polypeptide = ADP + phosphate + an unfolded polypeptide.. In terms of biological role, together with its co-chaperonin GroES, plays an essential role in assisting protein folding. The GroEL-GroES system forms a nano-cage that allows encapsulation of the non-native substrate proteins and provides a physical environment optimized to promote and accelerate protein folding. The sequence is that of Chaperonin GroEL from Staphylococcus aureus (strain bovine RF122 / ET3-1).